Consider the following 33-residue polypeptide: Brevinin-2E (33 aa).

Residues Cys-27 and Cys-33 are joined by a disulfide bond.

It belongs to the frog skin active peptide (FSAP) family. Brevinin subfamily. In terms of tissue distribution, expressed by the skin glands.

Its subcellular location is the secreted. Functionally, shows antibacterial activity against representative Gram-negative and Gram-positive bacterial species, and hemolytic activity. The protein is Brevinin-2E of Pelophylax lessonae (Pool frog).